The following is a 258-amino-acid chain: Regulatory protein RecX (258 aa).

The protein belongs to the RecX family.

The protein resides in the cytoplasm. Its function is as follows. Modulates RecA activity. This is Regulatory protein RecX from Streptococcus equi subsp. zooepidemicus (strain MGCS10565).